The sequence spans 186 residues: ATP synthase subunit delta (186 aa).

It belongs to the ATPase delta chain family. F-type ATPases have 2 components, F(1) - the catalytic core - and F(0) - the membrane proton channel. F(1) has five subunits: alpha(3), beta(3), gamma(1), delta(1), epsilon(1). F(0) has three main subunits: a(1), b(2) and c(10-14). The alpha and beta chains form an alternating ring which encloses part of the gamma chain. F(1) is attached to F(0) by a central stalk formed by the gamma and epsilon chains, while a peripheral stalk is formed by the delta and b chains.

It is found in the cell inner membrane. Its function is as follows. F(1)F(0) ATP synthase produces ATP from ADP in the presence of a proton or sodium gradient. F-type ATPases consist of two structural domains, F(1) containing the extramembraneous catalytic core and F(0) containing the membrane proton channel, linked together by a central stalk and a peripheral stalk. During catalysis, ATP synthesis in the catalytic domain of F(1) is coupled via a rotary mechanism of the central stalk subunits to proton translocation. Functionally, this protein is part of the stalk that links CF(0) to CF(1). It either transmits conformational changes from CF(0) to CF(1) or is implicated in proton conduction. In Azorhizobium caulinodans (strain ATCC 43989 / DSM 5975 / JCM 20966 / LMG 6465 / NBRC 14845 / NCIMB 13405 / ORS 571), this protein is ATP synthase subunit delta.